Here is a 1580-residue protein sequence, read N- to C-terminus: Transcriptional activator GLI3 (1580 aa).

Methionine 1 carries the post-translational modification N-acetylmethionine. Composition is skewed to polar residues over residues methionine 1 to threonine 10 and isoleucine 58 to serine 78. The segment at methionine 1–serine 79 is disordered. The residue at position 175 (arginine 175) is an Omega-N-methylarginine. A disordered region spans residues glutamine 368 to glutamate 475. Residues asparagine 401–glycine 427 show a composition bias toward polar residues. Glycyl lysine isopeptide (Lys-Gly) (interchain with G-Cter in SUMO2) cross-links involve residues lysine 438 and lysine 462. Residues valine 461–proline 474 are compositionally biased toward basic and acidic residues. 5 C2H2-type zinc fingers span residues threonine 480–histidine 505, phenylalanine 513–histidine 540, histidine 546–histidine 570, tyrosine 576–histidine 601, and tyrosine 607–histidine 632. The tract at residues aspartate 620–leucine 728 is disordered. Over residues histidine 632–proline 648 the composition is skewed to basic and acidic residues. A Phosphoserine modification is found at serine 664. Basic and acidic residues predominate over residues serine 684–lysine 699. Positions serine 703 to serine 726 are enriched in low complexity. The segment at aspartate 745 to asparagine 845 is mediates interaction with DZIP1. Residue lysine 773 forms a Glycyl lysine isopeptide (Lys-Gly) (interchain with G-Cter in ubiquitin) linkage. Residue lysine 779 forms a Glycyl lysine isopeptide (Lys-Gly) (interchain with G-Cter in SUMO2); alternate linkage. A Glycyl lysine isopeptide (Lys-Gly) (interchain with G-Cter in ubiquitin); alternate cross-link involves residue lysine 779. Residues lysine 784 and lysine 800 each participate in a glycyl lysine isopeptide (Lys-Gly) (interchain with G-Cter in ubiquitin) cross-link. Serine 849, serine 865, serine 877, and serine 907 each carry phosphoserine; by PKA. Over residues arginine 863–alanine 882 the composition is skewed to low complexity. The segment at arginine 863–leucine 918 is disordered. The span at glutamate 908–leucine 918 shows a compositional bias: polar residues. Phosphoserine; by PKA occurs at positions 980 and 1006. The interval aspartate 981–arginine 1042 is disordered.

This sequence belongs to the GLI C2H2-type zinc-finger protein family. The full-length GLI3 form (GLI3FL) interacts with SUFU and this interaction regulates the formation of either repressor or activator forms of GLI3. Its association with SUFU is regulated by Hh signaling and dissociation of the SUFU-GLI3 interaction requires the presence of the ciliary motor KIF3A. Interacts with KIF7. The activator form of GLI3 (GLI3A) but not the repressor form (GLI3R) can interact with TRPS1. The phosphorylated form interacts with BTRC. Interacts with ZIC1. Interacts with ZIC3 (via C2H2-type domains 3, 4 and 5); the interaction enhances its transcriptional activity. Interacts with WRD11; the interaction associates EMX1 with GLI3. Interacts with DZIP1; retains GLI3 within the cytoplasm. Phosphorylated on multiple sites by protein kinase A (PKA) and phosphorylation by PKA primes further phosphorylation by CK1 and GSK3. Phosphorylated by DYRK2 (in vitro). Phosphorylation is essential for its proteolytic processing. In terms of processing, transcriptional repressor GLI3R, a C-terminally truncated form, is generated from the full-length GLI3 protein (GLI3FL/GLI3-190) through proteolytic processing. This process requires PKA-primed phosphorylation of GLI3, ubiquitination of GLI3 and the presence of BTRC. GLI3FL is complexed with SUFU in the cytoplasm and is maintained in a neutral state. Without the Hh signal, the SUFU-GLI3 complex is recruited to cilia, leading to the efficient processing of GLI3FL into GLI3R. GLI3R formation leads to its dissociation from SUFU, allowing it to translocate into the nucleus, and repress Hh target genes. When Hh signaling is initiated, SUFU dissociates from GLI3FL and this has two consequences. First, GLI3R production is halted. Second, free GLI3FL translocates to the nucleus, where it is phosphorylated, destabilized, and converted to a transcriptional activator (GLI3A). Phosphorylated in vitro by ULK3. As to expression, is expressed in a wide variety of normal adult tissues, including lung, colon, spleen, placenta, testis, and myometrium.

The protein resides in the nucleus. It is found in the cytoplasm. Its subcellular location is the cell projection. It localises to the cilium. In terms of biological role, has a dual function as a transcriptional activator and a repressor of the sonic hedgehog (Shh) pathway, and plays a role in limb development. The full-length GLI3 form (GLI3FL) after phosphorylation and nuclear translocation, acts as an activator (GLI3A) while GLI3R, its C-terminally truncated form, acts as a repressor. A proper balance between the GLI3 activator and the repressor GLI3R, rather than the repressor gradient itself or the activator/repressor ratio gradient, specifies limb digit number and identity. In concert with TRPS1, plays a role in regulating the size of the zone of distal chondrocytes, in restricting the zone of PTHLH expression in distal cells and in activating chondrocyte proliferation. Binds to the minimal GLI-consensus sequence 5'-GGGTGGTC-3'. The protein is Transcriptional activator GLI3 (GLI3) of Homo sapiens (Human).